Consider the following 113-residue polypeptide: Iron-sulfur cluster insertion protein ErpA (113 aa).

Iron-sulfur cluster is bound by residues cysteine 41, cysteine 105, and cysteine 107.

The protein belongs to the HesB/IscA family. Homodimer. It depends on iron-sulfur cluster as a cofactor.

Its function is as follows. Required for insertion of 4Fe-4S clusters for at least IspG. The protein is Iron-sulfur cluster insertion protein ErpA of Aliivibrio fischeri (strain ATCC 700601 / ES114) (Vibrio fischeri).